Consider the following 316-residue polypeptide: MDVLLANPRGFCAGVDRAIEIVKRAIETLGAPIYVRHEVVHNRFVVDDLKQRGAIFVEELDEVPDNNTVIFSAHGVSQAVRQEAERRGLKVFDATCPLVTKVHFEVARHCRAGRDVVLIGHAGHPEVEGTMGQWNREAGTGQIYLVEDVEQVATLQINQPENFAYTTQTTLSVDDTRGIIDALRERFPAMQGPKNDDICYATQNRQDAVRDLAKRCDLVLVVGSPNSSNSNRLSELARREGVESYLIDGAHEIDPAWVAGKQHIGVTAGASAPQVLVDGVLARLAELGATGVGELDGEPESMVFALPKELRLRLVD.

Position 12 (cysteine 12) interacts with [4Fe-4S] cluster. (2E)-4-hydroxy-3-methylbut-2-enyl diphosphate-binding residues include histidine 41 and histidine 74. Residues histidine 41 and histidine 74 each coordinate dimethylallyl diphosphate. 2 residues coordinate isopentenyl diphosphate: histidine 41 and histidine 74. [4Fe-4S] cluster is bound at residue cysteine 96. Residue histidine 124 participates in (2E)-4-hydroxy-3-methylbut-2-enyl diphosphate binding. Histidine 124 serves as a coordination point for dimethylallyl diphosphate. Position 124 (histidine 124) interacts with isopentenyl diphosphate. Glutamate 126 functions as the Proton donor in the catalytic mechanism. A (2E)-4-hydroxy-3-methylbut-2-enyl diphosphate-binding site is contributed by threonine 169. Cysteine 199 contributes to the [4Fe-4S] cluster binding site. Residues serine 227, serine 228, asparagine 229, and serine 271 each coordinate (2E)-4-hydroxy-3-methylbut-2-enyl diphosphate. Residues serine 227, serine 228, asparagine 229, and serine 271 each contribute to the dimethylallyl diphosphate site. Isopentenyl diphosphate-binding residues include serine 227, serine 228, asparagine 229, and serine 271.

Belongs to the IspH family. [4Fe-4S] cluster is required as a cofactor.

The catalysed reaction is isopentenyl diphosphate + 2 oxidized [2Fe-2S]-[ferredoxin] + H2O = (2E)-4-hydroxy-3-methylbut-2-enyl diphosphate + 2 reduced [2Fe-2S]-[ferredoxin] + 2 H(+). The enzyme catalyses dimethylallyl diphosphate + 2 oxidized [2Fe-2S]-[ferredoxin] + H2O = (2E)-4-hydroxy-3-methylbut-2-enyl diphosphate + 2 reduced [2Fe-2S]-[ferredoxin] + 2 H(+). It participates in isoprenoid biosynthesis; dimethylallyl diphosphate biosynthesis; dimethylallyl diphosphate from (2E)-4-hydroxy-3-methylbutenyl diphosphate: step 1/1. It functions in the pathway isoprenoid biosynthesis; isopentenyl diphosphate biosynthesis via DXP pathway; isopentenyl diphosphate from 1-deoxy-D-xylulose 5-phosphate: step 6/6. In terms of biological role, catalyzes the conversion of 1-hydroxy-2-methyl-2-(E)-butenyl 4-diphosphate (HMBPP) into a mixture of isopentenyl diphosphate (IPP) and dimethylallyl diphosphate (DMAPP). Acts in the terminal step of the DOXP/MEP pathway for isoprenoid precursor biosynthesis. In Stenotrophomonas maltophilia (strain K279a), this protein is 4-hydroxy-3-methylbut-2-enyl diphosphate reductase.